The following is a 607-amino-acid chain: Polyadenylate-binding protein 1-like (607 aa).

RRM domains are found at residues 11–89, 99–175, 191–268, and 294–370; these read SSLY…WSHR, GNIF…HFKS, TNIY…RAQK, and VNLY…LAQR. The region spanning 523 to 600 is the PABC domain; it reads HQPLTVSMLA…AVAVLQVHRE (78 aa).

Belongs to the polyadenylate-binding protein type-1 family. As to expression, expressed in ovary and testis.

The protein resides in the cytoplasm. In terms of biological role, poly(A)-binding protein involved in oocyte maturation and early embryo development. It is required for cytosolic mRNA polyadenylation and translational activation of maternally stored mRNA in oocytes. This Mus musculus (Mouse) protein is Polyadenylate-binding protein 1-like.